The primary structure comprises 175 residues: FMRFamide-like neuropeptides 1 (175 aa).

An N-terminal signal peptide occupies residues 1–21 (MTLLYQVGLLLLVAATYKVSA). A propeptide spanning residues 22 to 68 (ECCTPGATSDFCTVFSMLSTMEQNEVMNFIGENCDGDAEVALQKMEK) is cleaved from the precursor. Y76 carries the tyrosine amide modification. Positions 79-86 (SAAVKSLG) are excised as a propeptide. 6 positions are modified to phenylalanine amide: F98, F108, F120, F130, F142, and F154. A propeptide spanning residues 157–165 (SFDNFDRES) is cleaved from the precursor. F173 carries the post-translational modification Phenylalanine amide.

Belongs to the FARP (FMRFamide related peptide) family. In terms of processing, may be processed by convertase egl-3. In terms of tissue distribution, each flp gene is expressed in a distinct set of neurons. Flp-1 is expressed in the AVA interneurons, the M5 cholinergic pharyngeal motoneurons, and the AIA, AIY, AVE, AVK, RIG and RMG neurons.

Its subcellular location is the secreted. Functionally, together with flp-18, plays a homeostatic role by acting on the GABAergic neural transmission at neuromuscular junctions to prevent overexcitation of the locomotor circuit. In terms of biological role, inhibits the activity of dissected pharyngeal myogenic muscle system. Its function is as follows. DPNFLRF-amide: Inhibits the activity of dissected pharyngeal myogenic muscle system. Acts as a ligand for the npr-22 receptor in vitro. This Caenorhabditis elegans protein is FMRFamide-like neuropeptides 1 (flp-1).